Reading from the N-terminus, the 212-residue chain is Proteasome subunit beta type-2 (212 aa).

This sequence belongs to the peptidase T1B family. As to quaternary structure, the 26S proteasome consists of a 20S proteasome core and two 19S regulatory subunits. The 20S proteasome core is composed of 28 subunits that are arranged in four stacked rings, resulting in a barrel-shaped structure. The two end rings are each formed by seven alpha subunits, and the two central rings are each formed by seven beta subunits. The catalytic chamber with the active sites is on the inside of the barrel.

Its subcellular location is the cytoplasm. It localises to the nucleus. Functionally, non-catalytic component of the proteasome, a multicatalytic proteinase complex which is characterized by its ability to cleave peptides with Arg, Phe, Tyr, Leu, and Glu adjacent to the leaving group at neutral or slightly basic pH. The proteasome has an ATP-dependent proteolytic activity. This Oryza sativa subsp. japonica (Rice) protein is Proteasome subunit beta type-2 (PBD1).